Reading from the N-terminus, the 505-residue chain is AMP phosphorylase (505 aa).

AMP-binding positions include Gly170, 196-201 (SRAITS), and Thr205. Asp258 (proton donor) is an active-site residue. The AMP site is built by Ser266 and Lys290.

The protein belongs to the thymidine/pyrimidine-nucleoside phosphorylase family. Type 2 subfamily.

It catalyses the reaction AMP + phosphate = alpha-D-ribose 1,5-bisphosphate + adenine. The enzyme catalyses CMP + phosphate = cytosine + alpha-D-ribose 1,5-bisphosphate. The catalysed reaction is UMP + phosphate = alpha-D-ribose 1,5-bisphosphate + uracil. Its function is as follows. Catalyzes the conversion of AMP and phosphate to adenine and ribose 1,5-bisphosphate (R15P). Exhibits phosphorylase activity toward CMP and UMP in addition to AMP. Functions in an archaeal AMP degradation pathway, together with R15P isomerase and RubisCO. The chain is AMP phosphorylase from Methanococcus maripaludis (strain C5 / ATCC BAA-1333).